The chain runs to 345 residues: Methylthioribose-1-phosphate isomerase 2 (345 aa).

Substrate is bound by residues 47–49 (RGA), Arg88, and Gln194. Residue Asp235 is the Proton donor of the active site. Position 245–246 (245–246 (NK)) interacts with substrate.

The protein belongs to the eIF-2B alpha/beta/delta subunits family. MtnA subfamily.

The enzyme catalyses 5-(methylsulfanyl)-alpha-D-ribose 1-phosphate = 5-(methylsulfanyl)-D-ribulose 1-phosphate. Its pathway is amino-acid biosynthesis; L-methionine biosynthesis via salvage pathway; L-methionine from S-methyl-5-thio-alpha-D-ribose 1-phosphate: step 1/6. Catalyzes the interconversion of methylthioribose-1-phosphate (MTR-1-P) into methylthioribulose-1-phosphate (MTRu-1-P). This is Methylthioribose-1-phosphate isomerase 2 from Pseudothermotoga lettingae (strain ATCC BAA-301 / DSM 14385 / NBRC 107922 / TMO) (Thermotoga lettingae).